The sequence spans 65 residues: Large ribosomal subunit protein bL35 (65 aa).

The interval 1-23 is disordered; the sequence is MPKIKTNRGAAKRFKKTGTGKVK. Residues 10–23 are compositionally biased toward basic residues; that stretch reads AAKRFKKTGTGKVK.

Belongs to the bacterial ribosomal protein bL35 family.

The polypeptide is Large ribosomal subunit protein bL35 (Trichlorobacter lovleyi (strain ATCC BAA-1151 / DSM 17278 / SZ) (Geobacter lovleyi)).